The following is a 420-amino-acid chain: Sulfate adenylyltransferase (420 aa).

A2 bears the N-acetylalanine mark.

The protein belongs to the sulfate adenylyltransferase family. It depends on Mg(2+) as a cofactor.

The catalysed reaction is sulfate + ATP + H(+) = adenosine 5'-phosphosulfate + diphosphate. Its pathway is sulfur metabolism; hydrogen sulfide biosynthesis; sulfite from sulfate: step 1/3. With respect to regulation, inhibited by adenosine 5'-phosphosulfate (APS), but not by 3'phosphoadenosine 5'-phosphosulfate (PAPS). Inhibited by AMP, ADP, CTP, GTP, ITP, UTP and anions other than those in group IV. The sequence is that of Sulfate adenylyltransferase from Pyropia yezoensis (Susabi-nori).